The following is a 193-amino-acid chain: Ribosomal RNA small subunit methyltransferase G (193 aa).

Residues glycine 64, leucine 69, 113 to 114 (IE), and arginine 126 each bind S-adenosyl-L-methionine.

Belongs to the methyltransferase superfamily. RNA methyltransferase RsmG family.

It localises to the cytoplasm. The enzyme catalyses guanosine(527) in 16S rRNA + S-adenosyl-L-methionine = N(7)-methylguanosine(527) in 16S rRNA + S-adenosyl-L-homocysteine. Specifically methylates the N7 position of guanine in position 527 of 16S rRNA. This is Ribosomal RNA small subunit methyltransferase G from Rickettsia massiliae (strain Mtu5).